Consider the following 647-residue polypeptide: MRLTLLCCTWREERMGEEGSELPVCASCGQRIYDGQYLQALNADWHADCFRCCDCSASLSHQYYEKDGQLFCKKDYWARYGESCHGCSEQITKGLVMVAGELKYHPECFICLTCGTFIGDGDTYTLVEHSKLYCGHCYYQTVVTPVIEQILPDSPGSHLPHTVTLVSIPASSHGKRGLSVSIDPPHGPPGCGTEHSHTVRVQGVDPGCMSPDVKNSIHVGDRILEINGTPIRNVPLDEIDLLIQETSRLLQLTLEHDPHDTLGHGLGPETSPLSSPAYTPSGEAGSSARQKPVLRSCSIDRSPGAGSLGSPASQRKDLGRSESLRVVCRPHRIFRPSDLIHGEVLGKGCFGQAIKVTHRETGEVMVMKELIRFDEETQRTFLKEVKVMRCLEHPNVLKFIGVLYKDKRLNFITEYIKGGTLRGIIKSMDSQYPWSQRVSFAKDIASGMAYLHSMNIIHRDLNSHNCLVRENKNVVVADFGLARLMVDEKTQPEGLRSLKKPDRKKRYTVVGNPYWMAPEMINGRSYDEKVDVFSFGIVLCEIIGRVNADPDYLPRTMDFGLNVRGFLDRYCPPNCPPSFFPITVRCCDLDPEKRPSFVKLEHWLETLRMHLAGHLPLGPQLEQLDRGFWETYRRGESGLPAHPEVPD.

2 LIM zinc-binding domains span residues cysteine 25–aspartate 75 and cysteine 84–cysteine 137. Residues leucine 165–proline 258 enclose the PDZ domain. Serine 210 carries the post-translational modification Phosphoserine. Threonine 229 is modified (phosphothreonine). Positions aspartate 260–glycine 319 are disordered. Phosphoserine is present on residues serine 298, serine 302, serine 307, and serine 310. Low complexity predominate over residues serine 302 to serine 313. Phosphoserine; by MAPKAPK2 is present on serine 323. Phosphoserine is present on serine 337. In terms of domain architecture, Protein kinase spans leucine 339–leucine 604. ATP contacts are provided by residues leucine 345–alanine 353 and lysine 368. The active site involves aspartate 460. Position 508 is a phosphothreonine; by ROCK1 and PAK1 (threonine 508).

This sequence belongs to the protein kinase superfamily. TKL Ser/Thr protein kinase family. As to quaternary structure, interacts (via LIM domain) with the cytoplasmic domain of NRG1. Interacts with NISCH. Interacts with RLIM and RNF6. Self-associates to form homodimers. Interacts with HSP90AA1; this interaction promotes LIMK1 dimerization and subsequent transphosphorylation. Interacts with CDKN1C. Interacts with SSH1. Interacts with ROCK1. Interacts (via LIM zinc-binding domains) with FAM89B/LRAP25 (via LRR repeat). Forms a tripartite complex with CDC42BPA, CDC42BPB and FAM89B/LRAP25. Post-translationally, autophosphorylated. Phosphorylated on Thr-508 by ROCK1 and PAK1, resulting in activation. Phosphorylated by PAK4 which increases the ability of LIMK1 to phosphorylate cofilin. Phosphorylated at Ser-323 by MAPKAPK2 during activation of VEGFA-induced signaling, which results in activation of LIMK1 and promotion of actin reorganization, cell migration, and tubule formation of endothelial cells. Dephosphorylated and inactivated by SSH1. Phosphorylated by CDC42BP. Ubiquitinated. 'Lys-48'-linked polyubiquitination by RNF6 leads to proteasomal degradation through the 26S proteasome, modulating LIMK1 levels in the growth cone and its effect on axonal outgrowth. Also polyubiquitinated by RLIM. As to expression, highest expression in both adult and fetal nervous system. Detected ubiquitously throughout the different regions of adult brain, with highest levels in the cerebral cortex. Expressed to a lesser extent in heart and skeletal muscle.

It is found in the cytoplasm. It localises to the nucleus. Its subcellular location is the cytoskeleton. The protein resides in the cell projection. The protein localises to the lamellipodium. The enzyme catalyses L-seryl-[protein] + ATP = O-phospho-L-seryl-[protein] + ADP + H(+). It catalyses the reaction L-threonyl-[protein] + ATP = O-phospho-L-threonyl-[protein] + ADP + H(+). Serine/threonine-protein kinase that plays an essential role in the regulation of actin filament dynamics. Acts downstream of several Rho family GTPase signal transduction pathways. Activated by upstream kinases including ROCK1, PAK1 and PAK4, which phosphorylate LIMK1 on a threonine residue located in its activation loop. LIMK1 subsequently phosphorylates and inactivates the actin binding/depolymerizing factors cofilin-1/CFL1, cofilin-2/CFL2 and destrin/DSTN, thereby preventing the cleavage of filamentous actin (F-actin), and stabilizing the actin cytoskeleton. In this way LIMK1 regulates several actin-dependent biological processes including cell motility, cell cycle progression, and differentiation. Phosphorylates TPPP on serine residues, thereby promoting microtubule disassembly. Stimulates axonal outgrowth and may be involved in brain development. In terms of biological role, has a dominant negative effect on actin cytoskeletal changes. Required for atypical chemokine receptor ACKR2-induced phosphorylation of cofilin (CFL1). This chain is LIM domain kinase 1 (LIMK1), found in Homo sapiens (Human).